The chain runs to 180 residues: Acireductone dioxygenase (180 aa).

4 residues coordinate Fe(2+): histidine 88, histidine 90, glutamate 94, and histidine 133. Histidine 88, histidine 90, glutamate 94, and histidine 133 together coordinate Ni(2+).

The protein belongs to the acireductone dioxygenase (ARD) family. In terms of assembly, monomer. Interacts with MMP14. The cofactor is Fe(2+). Requires Ni(2+) as cofactor.

Its subcellular location is the cytoplasm. The protein localises to the nucleus. It is found in the cell membrane. The enzyme catalyses 1,2-dihydroxy-5-(methylsulfanyl)pent-1-en-3-one + O2 = 4-methylsulfanyl-2-oxobutanoate + formate + 2 H(+). It catalyses the reaction 1,2-dihydroxy-5-(methylsulfanyl)pent-1-en-3-one + O2 = 3-(methylsulfanyl)propanoate + CO + formate + 2 H(+). The protein operates within amino-acid biosynthesis; L-methionine biosynthesis via salvage pathway; L-methionine from S-methyl-5-thio-alpha-D-ribose 1-phosphate: step 5/6. Functionally, catalyzes 2 different reactions between oxygen and the acireductone 1,2-dihydroxy-3-keto-5-methylthiopentene (DHK-MTPene) depending upon the metal bound in the active site. Fe-containing acireductone dioxygenase (Fe-ARD) produces formate and 2-keto-4-methylthiobutyrate (KMTB), the alpha-ketoacid precursor of methionine in the methionine recycle pathway. Ni-containing acireductone dioxygenase (Ni-ARD) produces methylthiopropionate, carbon monoxide and formate, and does not lie on the methionine recycle pathway. The protein is Acireductone dioxygenase of Gallus gallus (Chicken).